A 159-amino-acid chain; its full sequence is Phosphopantetheine adenylyltransferase (159 aa).

Position 9 (serine 9) interacts with substrate. Residues 9–10 (SF) and histidine 17 contribute to the ATP site. The substrate site is built by lysine 41, leucine 73, and lysine 87. Residues 88 to 90 (GLR), glutamate 98, and 122 to 128 (YSFLSSS) each bind ATP.

This sequence belongs to the bacterial CoaD family. As to quaternary structure, homohexamer. The cofactor is Mg(2+).

Its subcellular location is the cytoplasm. It carries out the reaction (R)-4'-phosphopantetheine + ATP + H(+) = 3'-dephospho-CoA + diphosphate. The protein operates within cofactor biosynthesis; coenzyme A biosynthesis; CoA from (R)-pantothenate: step 4/5. Reversibly transfers an adenylyl group from ATP to 4'-phosphopantetheine, yielding dephospho-CoA (dPCoA) and pyrophosphate. The polypeptide is Phosphopantetheine adenylyltransferase (Streptomyces coelicolor (strain ATCC BAA-471 / A3(2) / M145)).